Consider the following 317-residue polypeptide: Melanocyte-stimulating hormone receptor (317 aa).

The Extracellular portion of the chain corresponds to 1–37 (MPALGSPRRLLGSLNCTPPATLPLTLAPNRTGPQCLE). N-linked (GlcNAc...) asparagine glycosylation occurs at N29. The chain crosses the membrane as a helical span at residues 38-63 (VSIPDGLFLSLGLVSLVENVLVVAAI). Over 64–72 (AKNRNLHSP) the chain is Cytoplasmic. The helical transmembrane segment at 73 to 93 (MYYFICCLAMSDLLVSVSNVL) threads the bilayer. Topologically, residues 94–118 (ETAVMLLLEAGVLATRAAVVQQLDN) are extracellular. The chain crosses the membrane as a helical span at residues 119–140 (VIDVLICSSMVSSLCFLGAIAV). Topologically, residues 141–163 (DRYISIFYALRYHSVVTLPRAWR) are cytoplasmic. Residues 164–183 (IIAAIWVASILTSVLSITYY) traverse the membrane as a helical segment. The Extracellular segment spans residues 184–191 (NHTVVLLC). The helical transmembrane segment at 192–211 (LVGFFIAMLALMAVLYVHML) threads the bilayer. The Cytoplasmic segment spans residues 212–240 (ARACQHARGIARLQKRQRPIHQGFGLKGA). Residues 241–266 (ATLTILLGVFFLCWGPFFLHLSLIVL) form a helical membrane-spanning segment. The Extracellular segment spans residues 267–279 (CPQHPTCGCIFKN). Residues 280–300 (FNLFLALIICNAIVDPLIYAF) traverse the membrane as a helical segment. Over 301-317 (RSQELRKTLQEVLQCSW) the chain is Cytoplasmic. C315 carries the S-palmitoyl cysteine lipid modification.

The protein belongs to the G-protein coupled receptor 1 family. Interacts with MGRN1, but does not undergo MGRN1-mediated ubiquitination; this interaction competes with GNAS-binding and thus inhibits agonist-induced cAMP production. Interacts with OPN3; the interaction results in a decrease in MC1R-mediated cAMP signaling and ultimately a decrease in melanin production in melanocytes.

It localises to the cell membrane. In terms of biological role, receptor for MSH (alpha, beta and gamma) and ACTH. The activity of this receptor is mediated by G proteins which activate adenylate cyclase. Mediates melanogenesis, the production of eumelanin (black/brown) and phaeomelanin (red/yellow), via regulation of cAMP signaling in melanocytes. This Capra hircus (Goat) protein is Melanocyte-stimulating hormone receptor (MC1R).